Here is a 299-residue protein sequence, read N- to C-terminus: GTPase Era (299 aa).

In terms of domain architecture, Era-type G spans 5 to 175; it reads RSGFVCFVGR…TDVLAGKLPP (171 aa). The tract at residues 13-20 is G1; that stretch reads GRPNTGKS. A GTP-binding site is contributed by 13 to 20; the sequence is GRPNTGKS. The tract at residues 39–43 is G2; the sequence is QTTRH. The tract at residues 60 to 63 is G3; the sequence is DTPG. Residues 60–64 and 124–127 contribute to the GTP site; these read DTPGL and TKID. Positions 124–127 are G4; that stretch reads TKID. Positions 154–156 are G5; that stretch reads VSA. Residues 206–285 form the KH type-2 domain; it reads VRDELPHSLA…YLDLRVKIAK (80 aa).

This sequence belongs to the TRAFAC class TrmE-Era-EngA-EngB-Septin-like GTPase superfamily. Era GTPase family. In terms of assembly, monomer.

Its subcellular location is the cell envelope. The protein localises to the secreted. The protein resides in the cell wall. Functionally, exhibits GTPase activity. Binds RNA but is probably not involved in ribosome assembly in mycobacteria. The chain is GTPase Era from Mycobacterium sp. (strain KMS).